A 66-amino-acid chain; its full sequence is Cold shock-like protein CspD (66 aa).

The CSD domain maps to 4–63; sequence GKVKWFNGEKGFGFIEVEGGEDVFVHFSAIQGDGFKTLEEGQEVSFEIVDGNRGPQAANV.

As to quaternary structure, homodimer.

It localises to the cytoplasm. The chain is Cold shock-like protein CspD (cspD) from Bacillus cereus.